The sequence spans 222 residues: Pyridoxine/pyridoxamine 5'-phosphate oxidase (222 aa).

Residues 11 to 14 (RVEY) and Lys79 contribute to the substrate site. FMN-binding positions include 74–79 (RTVLCK), 89–90 (YT), Lys96, and Gln118. Residues Tyr136, Arg140, and Ser144 each coordinate substrate. FMN-binding positions include 153–154 (QS) and Trp199. Position 205–207 (205–207 (RVH)) interacts with substrate. Arg209 serves as a coordination point for FMN.

The protein belongs to the pyridoxamine 5'-phosphate oxidase family. Homodimer. The cofactor is FMN.

The enzyme catalyses pyridoxamine 5'-phosphate + O2 + H2O = pyridoxal 5'-phosphate + H2O2 + NH4(+). It catalyses the reaction pyridoxine 5'-phosphate + O2 = pyridoxal 5'-phosphate + H2O2. It functions in the pathway cofactor metabolism; pyridoxal 5'-phosphate salvage; pyridoxal 5'-phosphate from pyridoxamine 5'-phosphate: step 1/1. It participates in cofactor metabolism; pyridoxal 5'-phosphate salvage; pyridoxal 5'-phosphate from pyridoxine 5'-phosphate: step 1/1. Its function is as follows. Catalyzes the oxidation of either pyridoxine 5'-phosphate (PNP) or pyridoxamine 5'-phosphate (PMP) into pyridoxal 5'-phosphate (PLP). In Mycolicibacterium vanbaalenii (strain DSM 7251 / JCM 13017 / BCRC 16820 / KCTC 9966 / NRRL B-24157 / PYR-1) (Mycobacterium vanbaalenii), this protein is Pyridoxine/pyridoxamine 5'-phosphate oxidase.